The primary structure comprises 374 residues: MALSWNIRIRRRSWFRFILPIIVLGLLCYGTWAYCHKLCYEQVDKRLRQKSVSVGLICAVCFLDVVVIFIWLQIVILVGPGTQPHVAPFLILPIASEEKTSNTSQNTSVEYDAVVPPKCYQSDPHGYPIWCSECQSLKMERTHHSSELGHCIPRFDHYCMWIGTVIGRDNYRLFVQFAAYFSTLLLIMWVSICVYIRIITQHNHNYSPNLNANIISTLVFAILGWLLTASLLASSIFYMSQNKTSLEAIIDSKRKKFGTRKIFCYYSEANKLRFVVEFDRSEFHSFWDKKSILANIKDFMGSNILMWIIPLGKPYTSRCKSDGKSGSKTTLVEILGPYEETLSDYTIQAIEDKISRGEYLATLRASGDDSDPAY.

At 1–13 (MALSWNIRIRRRS) the chain is on the cytoplasmic side. A helical transmembrane segment spans residues 14-34 (WFRFILPIIVLGLLCYGTWAY). The Lumenal segment spans residues 35-55 (CHKLCYEQVDKRLRQKSVSVG). Residues 56 to 76 (LICAVCFLDVVVIFIWLQIVI) traverse the membrane as a helical segment. Topologically, residues 77–173 (LVGPGTQPHV…TVIGRDNYRL (97 aa)) are cytoplasmic. The DHHC domain occupies 129 to 179 (IWCSECQSLKMERTHHSSELGHCIPRFDHYCMWIGTVIGRDNYRLFVQFAA). A helical membrane pass occupies residues 174-194 (FVQFAAYFSTLLLIMWVSICV). Over 195-217 (YIRIITQHNHNYSPNLNANIIST) the chain is Lumenal. A helical membrane pass occupies residues 218 to 238 (LVFAILGWLLTASLLASSIFY). The Cytoplasmic segment spans residues 239-374 (MSQNKTSLEA…ASGDDSDPAY (136 aa)).

This sequence belongs to the DHHC palmitoyltransferase family. PFA5 subfamily. Post-translationally, autopalmitoylated.

Its subcellular location is the membrane. The enzyme catalyses L-cysteinyl-[protein] + hexadecanoyl-CoA = S-hexadecanoyl-L-cysteinyl-[protein] + CoA. This Saccharomyces cerevisiae (strain ATCC 204508 / S288c) (Baker's yeast) protein is Palmitoyltransferase PFA5 (PFA5).